The chain runs to 161 residues: Phosphopantetheine adenylyltransferase (161 aa).

A substrate-binding site is contributed by Ser11. ATP contacts are provided by residues 11–12 and His19; that span reads SF. Positions 43, 75, and 89 each coordinate substrate. Residues 90–92, Glu100, and 125–131 each bind ATP; these read GLR and YSFISSS.

It belongs to the bacterial CoaD family. In terms of assembly, homohexamer. Mg(2+) is required as a cofactor.

The protein resides in the cytoplasm. The enzyme catalyses (R)-4'-phosphopantetheine + ATP + H(+) = 3'-dephospho-CoA + diphosphate. The protein operates within cofactor biosynthesis; coenzyme A biosynthesis; CoA from (R)-pantothenate: step 4/5. Reversibly transfers an adenylyl group from ATP to 4'-phosphopantetheine, yielding dephospho-CoA (dPCoA) and pyrophosphate. The polypeptide is Phosphopantetheine adenylyltransferase (Staphylococcus haemolyticus (strain JCSC1435)).